The primary structure comprises 733 residues: MTKQVFKTVFAGRELVVETGQVAKQANGSAVVRYGESTVLTAATMSKKMATGDFFPLQVNYEEKMYAAGKYPGGFNKREGRPSTDATLTARLIDRPIRPMFAEGFRNEVQVINTVLSYDEDASPQMAAMFGSSLALSISDIPFNGPIAGVQVGYVDGKFIINPSKEQKEVSLLELTVAGTKDAINMVESGAKELSEDIMLEALLKGHEAVKELIAFQEEIVAAVGKGKAEVELLHVDEELQAEIVAAYNSDLQKAVQVEEKLAREAATQAVKDQVTAVYEEKYADHEEFDRIMRDVAEILEQMEHAEVRRLITEDKVRPDGRKVDEIRPLDAEVDYLPRVHGSGLFTRGQTQALSVLTLAPMGETQIVDGLDPEYKKRFMHHYNFPQYSVGETGRYGAPGRREIGHGALGERALEQVLPSLEEFPYAIRLVAEVLESNGSSSQASICAGTLALMAGGVPIKAPVAGIAMGLISDGSNYTVLTDIQGLEDHFGDMDFKVAGTREGITALQMDIKIEGITAEILTEALAQAKKARFEILDLIEATIPAPRPELAPTAPKIDTIKIDVDKIKIVIGKGGETIDKIIAETGVKIDIDEEGNVSIYSSDQDAINRAKEIIAGLVREAKVDEVYHAKVVRIEKFGAFVNLFDKTDALVHISELAWTRTNNVEDVVQIGDEVDVKVIKIDAKGRVDASMKVLLPRPPKSDKPKHHHDKGHHPHKEYKGHKDHQESPKTEE.

Residues aspartate 489 and aspartate 495 each contribute to the Mg(2+) site. The 60-residue stretch at 556-615 (PKIDTIKIDVDKIKIVIGKGGETIDKIIAETGVKIDIDEEGNVSIYSSDQDAINRAKEII) folds into the KH domain. An S1 motif domain is found at 625–693 (DEVYHAKVVR…AKGRVDASMK (69 aa)). Residues 691–733 (SMKVLLPRPPKSDKPKHHHDKGHHPHKEYKGHKDHQESPKTEE) are disordered. A compositionally biased stretch (basic residues) spans 704 to 723 (KPKHHHDKGHHPHKEYKGHK). Residues 724–733 (DHQESPKTEE) are compositionally biased toward basic and acidic residues.

It belongs to the polyribonucleotide nucleotidyltransferase family. Mg(2+) is required as a cofactor.

The protein resides in the cytoplasm. It carries out the reaction RNA(n+1) + phosphate = RNA(n) + a ribonucleoside 5'-diphosphate. Its function is as follows. Involved in mRNA degradation. Catalyzes the phosphorolysis of single-stranded polyribonucleotides processively in the 3'- to 5'-direction. This is Polyribonucleotide nucleotidyltransferase from Streptococcus sanguinis (strain SK36).